We begin with the raw amino-acid sequence, 175 residues long: Clathrin-associated protein AP-3 complex component APS3 (175 aa).

This sequence belongs to the adaptor complexes small subunit family. Adaptor protein complex 3 (AP-3) is a heterotetramer composed of 2 large adaptins, a medium adaptin and a small adaptin.

The protein localises to the golgi apparatus. It localises to the cytoplasmic vesicle membrane. Part of the AP-3 complex, an adapter-related complex which is not clathrin-associated. The complex is associated with the Golgi region as well as more peripheral structures. It facilitates the budding of vesicles from the Golgi membrane. Involved in vacuolar trafficking and contributes to hyphal growth and pathogenesis. This Candida albicans (strain SC5314 / ATCC MYA-2876) (Yeast) protein is Clathrin-associated protein AP-3 complex component APS3 (APS3).